Reading from the N-terminus, the 199-residue chain is NAD(P)H dehydrogenase (quinone) (199 aa).

Positions 4 to 190 (VLVLYYSAYG…GGARYQGKVI (187 aa)) constitute a Flavodoxin-like domain. FMN-binding positions include 10–15 (SAYGHI) and 78–80 (TRF). Residue Tyr-12 participates in NAD(+) binding. Position 98 (Trp-98) interacts with substrate. FMN is bound by residues 113–119 (STASQHG) and His-134.

Belongs to the WrbA family. FMN serves as cofactor.

The catalysed reaction is a quinone + NADH + H(+) = a quinol + NAD(+). The enzyme catalyses a quinone + NADPH + H(+) = a quinol + NADP(+). The chain is NAD(P)H dehydrogenase (quinone) from Rhodopseudomonas palustris (strain BisB18).